We begin with the raw amino-acid sequence, 577 residues long: Sensor histidine kinase YesM (577 aa).

Residues 1 to 17 (MKKRVAGWYRRMKIKDK) are Cytoplasmic-facing. The helical transmembrane segment at 18 to 38 (LFVFLSLIMAVSFLFVYSGVQ) threads the bilayer. At 39-286 (YAFHVYDEQI…PFDQMFAKIS (248 aa)) the chain is on the extracellular side. A helical membrane pass occupies residues 287–307 (FMKTVIGTCFLLFFCVVLLFG). Over 308 to 577 (RKIANSITEP…ITIPCRNEVV (270 aa)) the chain is Cytoplasmic. The HAMP domain maps to 312–368 (NSITEPIEQLVTAMKSVQHSGIEAGVSLSLPEHTQDEAGMLNRHFTVMMKRINELME). Residues 365 to 574 (ELMEENVEKQ…RIVITIPCRN (210 aa)) form the Histidine kinase domain. Phosphohistidine; by autocatalysis is present on H392.

It localises to the cell membrane. The enzyme catalyses ATP + protein L-histidine = ADP + protein N-phospho-L-histidine.. Its function is as follows. Member of the two-component regulatory system YesM/YesN. Probably activates YesN by phosphorylation. The protein is Sensor histidine kinase YesM (yesM) of Bacillus subtilis (strain 168).